A 77-amino-acid chain; its full sequence is Small ribosomal subunit protein uS4 (77 aa).

Residues 45–77 (PFGGGRPGRVKRKNQKAAAKKASGGDGDEEDEE) are disordered. Over residues 52-63 (GRVKRKNQKAAA) the composition is skewed to basic residues.

The protein belongs to the universal ribosomal protein uS4 family.

The chain is Small ribosomal subunit protein uS4 (RPS9) from Nicotiana tabacum (Common tobacco).